A 132-amino-acid polypeptide reads, in one-letter code: Small ribosomal subunit protein uS8c (132 aa).

This sequence belongs to the universal ribosomal protein uS8 family. In terms of assembly, part of the 30S ribosomal subunit.

The protein localises to the plastid. Its subcellular location is the chloroplast. In terms of biological role, one of the primary rRNA binding proteins, it binds directly to 16S rRNA central domain where it helps coordinate assembly of the platform of the 30S subunit. The chain is Small ribosomal subunit protein uS8c (rps8) from Nandina domestica (Heavenly bamboo).